We begin with the raw amino-acid sequence, 146 residues long: Ribosome maturation factor RimP (146 aa).

It belongs to the RimP family.

The protein resides in the cytoplasm. Functionally, required for maturation of 30S ribosomal subunits. The protein is Ribosome maturation factor RimP of Helicobacter pylori (strain P12).